A 742-amino-acid chain; its full sequence is MEFVSGYRDEFLDFTALLFGWFRKFVAERGAVGTSLEGRCRQLEAQIRRLPQDPALWVLHVLPNHSVGISLGQGAEPGPGPGLGTAWLLGDNPPLHLRDLSPYISFVSLEDGEEGEEEEEEDEEEEKREDGGAGSTEKVEPEEDRELAPTSRESPQETNPPGESEEAAREAGGGKDGCREDRVENETRPQKRKGQRSEAAPLHVSCLLLVTDEHGTILGIDLLVDGAQGTASWGSGTKDLAPWAYALLCHSMACPMGSGDPRKPRQLTVGDARLHRELESLVPRLGVKLAKTPMRTWGPRPGFTFASLRARTCHVCHRHSFEAKLTPCPQCSAVLYCGEACLRADWQRCPDDVSHRFWCPRLAAFMERAGELATLPFTYTAEVTSETFNKEAFLASRGLTRGYWTQLSMLIPGPGFSRHPRGNTPSLSLLRGGDPYQLLQGDGTALMPPVPPHPPRGVFGSWQDYYTWRGLSLDSPIAVLLTYPLTVYYVITHLVPQSFPELNIQNKQSLKIHVVEAGKEFDLVMVFWELLVLLPHVALELQFVGDGLPPESDEQHFTLQRDSLEVSVRPGSGISARPSSGTKEKGGRRDLQIKVSARPYHLFQGPKPDLVIGFNSGFALKDTWLRSLPRLQSLRVPAFFTESSEYSCVMDGQTMAVATGGGTSPPQPNPFRSPFRLRAADNCMSWYCNAFIFHLVYKPAQGSGARPAPGPPPPSPTPSAPPAPTRRRRGEKKPGRGARRRK.

A disordered region spans residues 109 to 199 (LEDGEEGEEE…QKRKGQRSEA (91 aa)). The span at 110–127 (EDGEEGEEEEEEDEEEEK) shows a compositional bias: acidic residues. Polar residues predominate over residues 151 to 161 (SRESPQETNPP). Positions 166–189 (EAAREAGGGKDGCREDRVENETRP) are enriched in basic and acidic residues. The Zn(2+) site is built by C313, C316, C328, C331, C337, C341, H355, and C359. The segment at 313-359 (CHVCHRHSFEAKLTPCPQCSAVLYCGEACLRADWQRCPDDVSHRFWC) adopts an MYND-type zinc-finger fold. Disordered regions lie at residues 565-590 (EVSV…GRRD) and 701-742 (QGSG…RRRK). Over residues 708–724 (APGPPPPSPTPSAPPAP) the composition is skewed to pro residues. Basic residues predominate over residues 725 to 742 (TRRRRGEKKPGRGARRRK).

In terms of assembly, interacts with HDAC1, HDAC3, HDAC6 and, to a lesser extent, with HDAC7.

It is found in the nucleus. It localises to the cytoplasm. Acts as a transcriptional repressor through interaction with histone deacetylases (HDACs). May be important for spermiogenesis. This Homo sapiens (Human) protein is Zinc finger MYND domain-containing protein 15 (ZMYND15).